The chain runs to 396 residues: Acyl-[acyl-carrier-protein] desaturase, chloroplastic (396 aa).

Residues 1-33 constitute a chloroplast transit peptide; it reads MALKFHPLTSQSPKLPSFRMPQLASLRSPKFVM. Fe cation-binding residues include E138, E176, H179, E229, E262, and H265.

The protein belongs to the fatty acid desaturase type 2 family. As to quaternary structure, homodimer. The cofactor is Fe(2+).

The protein resides in the plastid. It is found in the chloroplast. It functions in the pathway lipid metabolism; fatty acid metabolism. In terms of biological role, introduces a cis double bond in the acyl chain of an acyl-[acyl-carrier protein]. In Cucumis sativus (Cucumber), this protein is Acyl-[acyl-carrier-protein] desaturase, chloroplastic.